The sequence spans 263 residues: Probable esterase PIR7A (263 aa).

Serine 82 functions as the Acyl-ester intermediate in the catalytic mechanism. Catalysis depends on charge relay system residues aspartate 213 and histidine 241.

This sequence belongs to the AB hydrolase superfamily.

The polypeptide is Probable esterase PIR7A (PIR7A) (Oryza sativa subsp. indica (Rice)).